A 788-amino-acid polypeptide reads, in one-letter code: MLLLLLLLLLLPPLVLRVAASRCLHDETQKSVSLLRPPFSQLPSKSRSSSLTLPSSRDPQPLRIQSCYLGDHISDGAWDPEGEGMRGGSRALAAVREATQRIQAVLAVQGPLLLSRDPAQYCHAVWGDPDSPNYHRCSLLNPGYKGESCLGAKIPDTHLRGYALWPEQGPPQLVQPDGPGVQNTDFLLYVRVAHTSKCHQETVSLCCPGWSTAAQSQLTAALTSWAQRRGFVMLPRLCLKLLGSSNLPTLASQSIRITGPSVIAYAACCQLDSEDRPLAGTIVYCAQHLTSPSLSHSDIVMATLHELLHALGFSGQLFKKWRDCPSGFSVRENCSTRQLVTRQDEWGQLLLTTPAVSLSLAKHLGVSGASLGVPLEEEEGLLSSHWEARLLQGSLMTATFDGAQRTRLDPITLAAFKDSGWYQVNHSAAEELLWGQGSGPEFGLVTTCGTGSSDFFCTGSGLGCHYLHLDKGSCSSDPMLEGCRMYKPLANGSECWKKENGFPAGVDNPHGEIYHPQSRCFFANLTSQLLPGDKPRHPSLTPHLKEAELMGRCYLHQCTGRGAYKVQVEGSPWVPCLPGKVIQIPGYYGLLFCPRGRLCQTNEDINAVTSPPVSLSTPDPLFQLSLELAGPPGHSLGKEQQEGLAEAVLEALASKGGTGRCYFHGPSITTSLVFTVHMWKSPGCQGPSVATLHKALTLTLQKKPLEVYHGGANFTTQPSKLLVTSDHNPSMTHLRLSMGLCLMLLILVGVMGTTAYQKRATLPVRPSASYHSPELHSTRVPVRGIREV.

The signal sequence occupies residues 1 to 20 (MLLLLLLLLLLPPLVLRVAA). Residues 21-735 (SRCLHDETQK…DHNPSMTHLR (715 aa)) lie on the Extracellular side of the membrane. A compositionally biased stretch (low complexity) spans 40–56 (SQLPSKSRSSSLTLPSS). The interval 40–59 (SQLPSKSRSSSLTLPSSRDP) is disordered. Residue histidine 305 participates in Zn(2+) binding. The active site involves glutamate 306. Histidine 309 is a binding site for Zn(2+). The N-linked (GlcNAc...) asparagine glycan is linked to asparagine 333. Zn(2+) is bound at residue histidine 385. N-linked (GlcNAc...) asparagine glycosylation is found at asparagine 425, asparagine 491, asparagine 524, and asparagine 713. The helical transmembrane segment at 736–756 (LSMGLCLMLLILVGVMGTTAY) threads the bilayer. Topologically, residues 757 to 788 (QKRATLPVRPSASYHSPELHSTRVPVRGIREV) are cytoplasmic. The disordered stretch occupies residues 767–788 (SASYHSPELHSTRVPVRGIREV).

It belongs to the peptidase M8 family. It depends on Zn(2+) as a cofactor.

It localises to the membrane. Putative metalloproteinase that plays a role in left-right patterning process. The chain is Ciliated left-right organizer metallopeptidase from Homo sapiens (Human).